The primary structure comprises 416 residues: Ribulose bisphosphate carboxylase large chain (416 aa).

An N6,N6,N6-trimethyllysine modification is found at K5. 2 residues coordinate substrate: N114 and T164. The active-site Proton acceptor is K166. A substrate-binding site is contributed by K168. Mg(2+)-binding residues include K192, D194, and E195. Position 192 is an N6-carboxylysine (K192). H285 acts as the Proton acceptor in catalysis. Positions 286, 318, and 370 each coordinate substrate.

This sequence belongs to the RuBisCO large chain family. Type I subfamily. In terms of assembly, heterohexadecamer of 8 large chains and 8 small chains; disulfide-linked. The disulfide link is formed within the large subunit homodimers. Mg(2+) serves as cofactor. In terms of processing, the disulfide bond which can form in the large chain dimeric partners within the hexadecamer appears to be associated with oxidative stress and protein turnover.

It is found in the plastid. It localises to the chloroplast. The enzyme catalyses 2 (2R)-3-phosphoglycerate + 2 H(+) = D-ribulose 1,5-bisphosphate + CO2 + H2O. It carries out the reaction D-ribulose 1,5-bisphosphate + O2 = 2-phosphoglycolate + (2R)-3-phosphoglycerate + 2 H(+). Its function is as follows. RuBisCO catalyzes two reactions: the carboxylation of D-ribulose 1,5-bisphosphate, the primary event in carbon dioxide fixation, as well as the oxidative fragmentation of the pentose substrate in the photorespiration process. Both reactions occur simultaneously and in competition at the same active site. The chain is Ribulose bisphosphate carboxylase large chain (rbcL) from Spigelia marilandica (Woodland pinkroot).